The chain runs to 375 residues: Homeobox protein Meis3 (375 aa).

The disordered stretch occupies residues 25–51 (PETVPAVPGPYGPHRPPQPLPPGLDSD). Residues 31–46 (VPGPYGPHRPPQPLPP) are compositionally biased toward pro residues. Positions 96–179 (GGDVCSSDSF…PIDLVIEDRD (84 aa)) constitute an MEIS N-terminal domain. Disordered stretches follow at residues 197–268 (PDQN…KRGI) and 329–348 (NRTG…GGYT). Low complexity predominate over residues 227–241 (SQSGDNSSDQGDGLD). The segment at residues 262-324 (RNKKRGIFPK…NARRRIVQPM (63 aa)) is a DNA-binding region (homeobox; TALE-type).

It belongs to the TALE/MEIS homeobox family.

Its subcellular location is the nucleus. Functionally, transcriptional regulator which directly modulates PDPK1 expression, thus promoting survival of pancreatic beta-cells. Also regulates expression of NDFIP1, BNIP3, and CCNG1. The protein is Homeobox protein Meis3 (MEIS3) of Homo sapiens (Human).